The chain runs to 357 residues: Arginine kinase (357 aa).

Position 2 is an N-acetylalanine (Ala2). Positions 9-91 (KLEEGFKKLQ…FDPIIEDYHK (83 aa)) constitute a Phosphagen kinase N-terminal domain. 64-68 (GVGVY) serves as a coordination point for L-arginine. The region spanning 119–356 (FVISTRVRCG…LELIKIEKEM (238 aa)) is the Phosphagen kinase C-terminal domain. Residues 122 to 126 (STRVR) and His185 contribute to the ATP site. An L-arginine-binding site is contributed by Glu225. Arg229 is an ATP binding site. Cys271 contacts L-arginine. Residues 280–284 (RASVH) and 309–314 (RGTRGE) each bind ATP. Glu314 contributes to the L-arginine binding site.

Belongs to the ATP:guanido phosphotransferase family.

It catalyses the reaction L-arginine + ATP = N(omega)-phospho-L-arginine + ADP + H(+). This chain is Arginine kinase, found in Pachygrapsus marmoratus (Marbled rock crab).